Consider the following 315-residue polypeptide: Methionyl-tRNA formyltransferase (315 aa).

Position 113–116 (113–116 (SILP)) interacts with (6S)-5,6,7,8-tetrahydrofolate.

Belongs to the Fmt family.

It catalyses the reaction L-methionyl-tRNA(fMet) + (6R)-10-formyltetrahydrofolate = N-formyl-L-methionyl-tRNA(fMet) + (6S)-5,6,7,8-tetrahydrofolate + H(+). In terms of biological role, attaches a formyl group to the free amino group of methionyl-tRNA(fMet). The formyl group appears to play a dual role in the initiator identity of N-formylmethionyl-tRNA by promoting its recognition by IF2 and preventing the misappropriation of this tRNA by the elongation apparatus. The protein is Methionyl-tRNA formyltransferase of Vibrio cholerae serotype O1 (strain ATCC 39541 / Classical Ogawa 395 / O395).